A 197-amino-acid chain; its full sequence is Imidazoleglycerol-phosphate dehydratase (197 aa).

This sequence belongs to the imidazoleglycerol-phosphate dehydratase family.

The protein localises to the cytoplasm. It carries out the reaction D-erythro-1-(imidazol-4-yl)glycerol 3-phosphate = 3-(imidazol-4-yl)-2-oxopropyl phosphate + H2O. The protein operates within amino-acid biosynthesis; L-histidine biosynthesis; L-histidine from 5-phospho-alpha-D-ribose 1-diphosphate: step 6/9. This is Imidazoleglycerol-phosphate dehydratase from Bradyrhizobium diazoefficiens (strain JCM 10833 / BCRC 13528 / IAM 13628 / NBRC 14792 / USDA 110).